We begin with the raw amino-acid sequence, 254 residues long: Protein orai-2 (254 aa).

4 helical membrane passes run 66–83 (TSALLSGFAMVAMVEVQL), 94–114 (LIAFSACTTVLVAVHLFALLI), 148–168 (LAWGFSTVLGILLFLAEVVLL), and 196–216 (AALVSTIIMVPVGLIFVVFTI).

The protein belongs to the Orai family. As to quaternary structure, oligomerizes in homomeric and heteromeric ORAI complexes. Native CRAC channels most likely consist of hexameric ORAI heteromers, implying that diverse ORAI1, ORAI2 and ORAI3 subunit combinations with distinct biophysical properties can operate in a cell-type specific way. Interacts with STIM1; this regulates channel activity. Interacts with CRACR2A/EFCAB4B.

It localises to the cell membrane. It carries out the reaction Ca(2+)(in) = Ca(2+)(out). CRAC channels are regulated by fast Ca(2+)-dependent inactivation (FCDI), a mechanism that limits Ca(2+) influx and cell toxicity. ORAI2 channels display prominent FCDI. Inhibited by lanthanides such as Gd(3+) ions. Pore-forming subunit of inward rectifying Ca(2+) release-activated Ca(2+) (CRAC) channels. Assembles with ORAI1 and ORAI3 to form hexameric CRAC channels that mediate Ca(2+) influx upon depletion of endoplasmic reticulum Ca(2+) store and channel activation by Ca(2+) sensor STIM1, a process known as store-operated Ca(2+) entry (SOCE). Various pore subunit combinations may account for distinct CRAC channel spatiotemporal and cell-type specific dynamics. ORAI1 mainly contributes to the generation of Ca(2+) plateaus involved in sustained Ca(2+) entry and is dispensable for cytosolic Ca(2+) oscillations, whereas ORAI2 and ORAI3 generate oscillatory patterns. CRAC channels assemble in Ca(2+) signaling microdomains where Ca(2+) influx is coupled to calmodulin and calcineurin signaling and activation of NFAT transcription factors recruited to ORAI1 via AKAP5. CRAC channels are the main pathway for Ca(2+) influx in T cells and promote the immune response to pathogens by activating NFAT-dependent cytokine and chemokine transcription. In Homo sapiens (Human), this protein is Protein orai-2 (ORAI2).